The chain runs to 529 residues: Bifunctional purine biosynthesis protein PurH (529 aa).

The MGS-like domain maps to 2–149; it reads TDLSPVRRAL…KNHAFVNVVV (148 aa).

The protein belongs to the PurH family.

The enzyme catalyses (6R)-10-formyltetrahydrofolate + 5-amino-1-(5-phospho-beta-D-ribosyl)imidazole-4-carboxamide = 5-formamido-1-(5-phospho-D-ribosyl)imidazole-4-carboxamide + (6S)-5,6,7,8-tetrahydrofolate. It catalyses the reaction IMP + H2O = 5-formamido-1-(5-phospho-D-ribosyl)imidazole-4-carboxamide. The protein operates within purine metabolism; IMP biosynthesis via de novo pathway; 5-formamido-1-(5-phospho-D-ribosyl)imidazole-4-carboxamide from 5-amino-1-(5-phospho-D-ribosyl)imidazole-4-carboxamide (10-formyl THF route): step 1/1. Its pathway is purine metabolism; IMP biosynthesis via de novo pathway; IMP from 5-formamido-1-(5-phospho-D-ribosyl)imidazole-4-carboxamide: step 1/1. The polypeptide is Bifunctional purine biosynthesis protein PurH (Ruegeria pomeroyi (strain ATCC 700808 / DSM 15171 / DSS-3) (Silicibacter pomeroyi)).